We begin with the raw amino-acid sequence, 185 residues long: Transcription factor E (185 aa).

The region spanning 5–88 (KNKELLEIAQ…YWRLETKKLP (84 aa)) is the HTH TFE/IIEalpha-type domain.

It belongs to the TFE family. As to quaternary structure, monomer. Interaction with RNA polymerase subunits RpoF and RpoE is necessary for Tfe stimulatory transcription activity. Able to interact with Tbp and RNA polymerase in the absence of DNA promoter. Interacts both with the preinitiation and elongation complexes.

In terms of biological role, transcription factor that plays a role in the activation of archaeal genes transcribed by RNA polymerase. Facilitates transcription initiation by enhancing TATA-box recognition by TATA-box-binding protein (Tbp), and transcription factor B (Tfb) and RNA polymerase recruitment. Not absolutely required for transcription in vitro, but particularly important in cases where Tbp or Tfb function is not optimal. It dynamically alters the nucleic acid-binding properties of RNA polymerases by stabilizing the initiation complex and destabilizing elongation complexes. Seems to translocate with the RNA polymerase following initiation and acts by binding to the non template strand of the transcription bubble in elongation complexes. The chain is Transcription factor E from Thermococcus kodakarensis (strain ATCC BAA-918 / JCM 12380 / KOD1) (Pyrococcus kodakaraensis (strain KOD1)).